A 1049-amino-acid chain; its full sequence is RTX-III toxin determinant A from serotype 2 (1049 aa).

The next 3 helical transmembrane spans lie at 154–170 (TIISGIQSVLGTVLAGI), 315–331 (ALIASSISLAISPLAFL), and 397–413 (LVGAPITLLVTGITGLI). Hemolysin-type calcium-binding repeat units lie at residues 743 to 760 (KGSKFRDIFHGADGDDLL), 761 to 778 (NGNDGDDILYGDKGNDEL), 779 to 796 (RGDNGNDQLYGGEGDDKL), 797 to 814 (LGGNGNNYLSGGDGNDEL), 825 to 842 (RGGKGDDKLYGSSGSDLL), and 843 to 860 (DGGEGNDYLEGGDGSDFY).

Belongs to the RTX prokaryotic toxin (TC 1.C.11) family. In terms of processing, palmitoylated by ApxIIIC. The toxin only becomes active when modified.

The protein resides in the secreted. The protein localises to the host cell membrane. Its function is as follows. Does not have hemolytic activity but shows a strong cytotoxicity towards alveolar macrophages and neutrophils. This is RTX-III toxin determinant A from serotype 2 (apxIIIA) from Actinobacillus pleuropneumoniae (Haemophilus pleuropneumoniae).